Reading from the N-terminus, the 257-residue chain is UPF0246 protein Ssed_1188 (257 aa).

It belongs to the UPF0246 family.

The polypeptide is UPF0246 protein Ssed_1188 (Shewanella sediminis (strain HAW-EB3)).